The sequence spans 544 residues: 4-coumarate--CoA ligase 2 (544 aa).

ATP-binding residues include serine 190, serine 191, glycine 192, threonine 193, threonine 194, and lysine 198. Tyrosine 240 is a (E)-4-coumaroyl-AMP binding site. A CoA-binding site is contributed by lysine 261. The segment at 263–332 is SBD1; that stretch reads DIVPFLELIQ…AKFPNAKLGQ (70 aa). Positions 310, 332, 333, 337, and 345 each coordinate (E)-4-coumaroyl-AMP. Glutamine 332, glycine 333, and threonine 337 together coordinate ATP. The SBD2 stretch occupies residues 333 to 400; it reads GYGMTEAGPV…IRGDQIMKGY (68 aa). Aspartate 421 and arginine 436 together coordinate ATP. (E)-4-coumaroyl-AMP-binding residues include lysine 438 and lysine 442. CoA contacts are provided by lysine 444 and glycine 445. Lysine 527 provides a ligand contact to ATP.

This sequence belongs to the ATP-dependent AMP-binding enzyme family. Mg(2+) serves as cofactor.

The enzyme catalyses (E)-4-coumarate + ATP + CoA = (E)-4-coumaroyl-CoA + AMP + diphosphate. It catalyses the reaction (E)-4-coumarate + ATP + H(+) = (E)-4-coumaroyl-AMP + diphosphate. The catalysed reaction is (E)-4-coumaroyl-AMP + CoA = (E)-4-coumaroyl-CoA + AMP + H(+). It functions in the pathway phytoalexin biosynthesis; 3,4',5-trihydroxystilbene biosynthesis; 3,4',5-trihydroxystilbene from trans-4-coumarate: step 1/2. Functionally, carboxylate--CoA ligase that may use 4-coumarate as substrate. Follows a two-step reaction mechanism, wherein the carboxylate substrate first undergoes adenylation by ATP, followed by a thioesterification in the presence of CoA to yield the final CoA thioester. This is 4-coumarate--CoA ligase 2 (4CL2) from Petroselinum crispum (Parsley).